The primary structure comprises 612 residues: Threonine--tRNA ligase (612 aa).

Residues aspartate 218–proline 509 form a catalytic region. Zn(2+) contacts are provided by cysteine 310, histidine 361, and histidine 486.

It belongs to the class-II aminoacyl-tRNA synthetase family. As to quaternary structure, homodimer. It depends on Zn(2+) as a cofactor.

It localises to the cytoplasm. The catalysed reaction is tRNA(Thr) + L-threonine + ATP = L-threonyl-tRNA(Thr) + AMP + diphosphate + H(+). Its function is as follows. Catalyzes the attachment of threonine to tRNA(Thr) in a two-step reaction: L-threonine is first activated by ATP to form Thr-AMP and then transferred to the acceptor end of tRNA(Thr). Also edits incorrectly charged L-seryl-tRNA(Thr). In Helicobacter pylori (strain J99 / ATCC 700824) (Campylobacter pylori J99), this protein is Threonine--tRNA ligase.